An 831-amino-acid chain; its full sequence is Periplasmic nitrate reductase (831 aa).

Positions 1–29 (MTVTRRDFVRHQALATAAAAAGVAVPAAA) form a signal peptide, tat-type signal. Residues 41–97 (LVWSKAPCRFCGTGCSVNVATKEGRVVATHGDIKSPVNRGLNCVKGYFLSKVMYGED) form the 4Fe-4S Mo/W bis-MGD-type domain. Residues cysteine 48, cysteine 51, cysteine 55, and cysteine 83 each contribute to the [4Fe-4S] cluster site. Residues lysine 85, glutamine 152, asparagine 177, cysteine 181, 214 to 221 (WGSNMAEM), 245 to 249 (STYEH), 264 to 266 (QSD), methionine 375, glutamine 379, asparagine 485, 511 to 512 (SD), lysine 534, aspartate 561, and 721 to 730 (TGRVIEHWHS) contribute to the Mo-bis(molybdopterin guanine dinucleotide) site. Tryptophan 797 serves as a coordination point for substrate. Positions 805 and 822 each coordinate Mo-bis(molybdopterin guanine dinucleotide).

This sequence belongs to the prokaryotic molybdopterin-containing oxidoreductase family. NasA/NapA/NarB subfamily. In terms of assembly, component of the periplasmic nitrate reductase NapAB complex composed of NapA and NapB. [4Fe-4S] cluster is required as a cofactor. Requires Mo-bis(molybdopterin guanine dinucleotide) as cofactor. In terms of processing, predicted to be exported by the Tat system. The position of the signal peptide cleavage has not been experimentally proven.

It is found in the periplasm. It catalyses the reaction 2 Fe(II)-[cytochrome] + nitrate + 2 H(+) = 2 Fe(III)-[cytochrome] + nitrite + H2O. In terms of biological role, catalytic subunit of the periplasmic nitrate reductase complex NapAB. Receives electrons from NapB and catalyzes the reduction of nitrate to nitrite. This is Periplasmic nitrate reductase from Saccharophagus degradans (strain 2-40 / ATCC 43961 / DSM 17024).